A 721-amino-acid polypeptide reads, in one-letter code: Catalase-peroxidase 1 (721 aa).

The tryptophyl-tyrosyl-methioninium (Trp-Tyr) (with M-249) cross-link spans 98–223 (WHAAGSYRVA…LAAVQMGLIY (126 aa)). The Proton acceptor role is filled by His99. Residues 223–249 (YVNPEGVNGQPDPLRTAQDVRVTFGRM) constitute a cross-link (tryptophyl-tyrosyl-methioninium (Tyr-Met) (with W-98)). His264 provides a ligand contact to heme b.

It belongs to the peroxidase family. Peroxidase/catalase subfamily. In terms of assembly, homodimer or homotetramer. Requires heme b as cofactor. In terms of processing, formation of the three residue Trp-Tyr-Met cross-link is important for the catalase, but not the peroxidase activity of the enzyme.

It catalyses the reaction H2O2 + AH2 = A + 2 H2O. It carries out the reaction 2 H2O2 = O2 + 2 H2O. Bifunctional enzyme with both catalase and broad-spectrum peroxidase activity. This is Catalase-peroxidase 1 from Legionella pneumophila subsp. pneumophila (strain Philadelphia 1 / ATCC 33152 / DSM 7513).